The sequence spans 69 residues: DNA gyrase inhibitor YacG (69 aa).

Zn(2+)-binding residues include cysteine 7, cysteine 10, cysteine 26, and cysteine 30.

The protein belongs to the DNA gyrase inhibitor YacG family. In terms of assembly, interacts with GyrB. Zn(2+) is required as a cofactor.

In terms of biological role, inhibits all the catalytic activities of DNA gyrase by preventing its interaction with DNA. Acts by binding directly to the C-terminal domain of GyrB, which probably disrupts DNA binding by the gyrase. The sequence is that of DNA gyrase inhibitor YacG from Shewanella baltica (strain OS223).